The following is a 145-amino-acid chain: Internal scaffolding protein VP3 (145 aa).

It belongs to the microviridae B protein family.

It localises to the host cytoplasm. In terms of biological role, participates in the assembly of the viral procapsid in the cytoplasm. Released from the procapsid upon genome packaging, possibly through affinity displacement by the protein ORF8, or by proteolysis. The polypeptide is Internal scaffolding protein VP3 (Chlamydia phage 1 (Bacteriophage Chp1)).